Here is a 211-residue protein sequence, read N- to C-terminus: Glycerol-3-phosphate acyltransferase (211 aa).

6 consecutive transmembrane segments (helical) span residues 10–30, 63–83, 90–110, 126–146, 152–172, and 174–194; these read FYTW…FGLL, TLTL…IKFL, SIII…PIWL, LGYY…FFIL, LSAL…YPHL, and AHCI…ANIA.

This sequence belongs to the PlsY family. In terms of assembly, probably interacts with PlsX.

The protein localises to the cell inner membrane. The catalysed reaction is an acyl phosphate + sn-glycerol 3-phosphate = a 1-acyl-sn-glycero-3-phosphate + phosphate. It participates in lipid metabolism; phospholipid metabolism. In terms of biological role, catalyzes the transfer of an acyl group from acyl-phosphate (acyl-PO(4)) to glycerol-3-phosphate (G3P) to form lysophosphatidic acid (LPA). This enzyme utilizes acyl-phosphate as fatty acyl donor, but not acyl-CoA or acyl-ACP. This Bartonella quintana (strain Toulouse) (Rochalimaea quintana) protein is Glycerol-3-phosphate acyltransferase.